We begin with the raw amino-acid sequence, 178 residues long: Large ribosomal subunit protein uL6 (178 aa).

It belongs to the universal ribosomal protein uL6 family. In terms of assembly, part of the 50S ribosomal subunit.

Functionally, this protein binds to the 23S rRNA, and is important in its secondary structure. It is located near the subunit interface in the base of the L7/L12 stalk, and near the tRNA binding site of the peptidyltransferase center. This Desulfatibacillum aliphaticivorans protein is Large ribosomal subunit protein uL6.